The following is a 247-amino-acid chain: Pulmonary surfactant-associated protein A (247 aa).

Residues 1 to 15 form the signal peptide; sequence MLLLSLALTLISAPA. The 73-residue stretch at 27 to 99 folds into the Collagen-like domain; the sequence is GSPGIPGTPG…PGERGPPGLP (73 aa). A 4-hydroxyproline mark is found at proline 29, proline 32, proline 35, proline 41, proline 53, proline 56, proline 62, proline 66, and proline 69. The tract at residues 30 to 100 is disordered; it reads GIPGTPGSHG…GERGPPGLPA (71 aa). Residues 41-50 show a composition bias toward basic and acidic residues; that stretch reads PGRDGRDGVK. The segment covering 53 to 64 has biased composition (pro residues); it reads PGPPGPMGPPGG. The span at 83-92 shows a compositional bias: basic and acidic residues; that stretch reads ERGDKGEPGE. A C-type lectin domain is found at 132–247; that stretch reads AVGEKIFSTN…LQYRLVICEF (116 aa). 2 disulfide bridges follow: cysteine 154-cysteine 245 and cysteine 223-cysteine 237. Asparagine 206 is a glycosylation site (N-linked (GlcNAc...) asparagine). Glutamate 214, arginine 216, asparagine 233, and aspartate 234 together coordinate Ca(2+).

This sequence belongs to the SFTPA family. Oligomeric complex of 6 set of homotrimers.

The protein resides in the secreted. It is found in the extracellular space. Its subcellular location is the extracellular matrix. The protein localises to the surface film. Functionally, in presence of calcium ions, it binds to surfactant phospholipids and contributes to lower the surface tension at the air-liquid interface in the alveoli of the mammalian lung and is essential for normal respiration. Enhances the expression of MYO18A/SP-R210 on alveolar macrophages. This chain is Pulmonary surfactant-associated protein A (SFTPA1), found in Oryctolagus cuniculus (Rabbit).